Consider the following 118-residue polypeptide: Small ribosomal subunit protein uS13 (118 aa).

The disordered stretch occupies residues 94–118 (SLPVRGQRTKTNARTRKGPRRPIKR).

The protein belongs to the universal ribosomal protein uS13 family. In terms of assembly, part of the 30S ribosomal subunit. Forms a loose heterodimer with protein S19. Forms two bridges to the 50S subunit in the 70S ribosome.

Its function is as follows. Located at the top of the head of the 30S subunit, it contacts several helices of the 16S rRNA. In the 70S ribosome it contacts the 23S rRNA (bridge B1a) and protein L5 of the 50S subunit (bridge B1b), connecting the 2 subunits; these bridges are implicated in subunit movement. Contacts the tRNAs in the A and P-sites. The protein is Small ribosomal subunit protein uS13 of Dichelobacter nodosus (strain VCS1703A).